Consider the following 579-residue polypeptide: Protein LYRIC (579 aa).

Topologically, residues 1-48 (MAARSWQDELAQQAEEGSARLRELLSVGLGFLRTELGLDLGLEPKRYP) are lumenal. An activation of NF-kappa-B region spans residues 1-71 (MAARSWQDEL…LLLFLLGYGW (71 aa)). The chain crosses the membrane as a helical span at residues 49–69 (GWVILVGTGALGLLLLFLLGY). Residues 70–579 (GWAAACAGAR…KKKKKARRET (510 aa)) lie on the Cytoplasmic side of the membrane. The interaction with BCCIP stretch occupies residues 72–168 (AAACAGARKK…EKSKKNKKKS (97 aa)). The disordered stretch occupies residues 78-222 (ARKKRRSPPR…SGSLDSTIPG (145 aa)). Positions 100-204 (DDLAQLKNLR…ISHREKRQQR (105 aa)) are interaction with RELA. Residues 108–126 (LRSEEQKKKNRKKLPEKPK) are compositionally biased toward basic and acidic residues. The segment covering 159-168 (EKSKKNKKKS) has biased composition (basic residues). A Phosphoserine modification is found at Ser-179. Residues 197 to 207 (HREKRQQRKRD) are compositionally biased toward basic residues. Ser-215 and Ser-250 each carry phosphoserine. Position 263 is an N6-acetyllysine (Lys-263). Residues 277-579 (NLTVNGGGWS…KKKKKARRET (303 aa)) form a disordered region. Residues Ser-297, Ser-303, and Ser-308 each carry the phosphoserine modification. A compositionally biased stretch (polar residues) spans 317–329 (SAWTQDTGDTNAN). Phosphoserine occurs at positions 341 and 366. Polar residues-rich tracts occupy residues 351 to 369 (EPVSQSTTSDYQWDVSRNQ), 380 to 391 (NGLSSADPSSDW), and 410 to 420 (LKSQEPISNDQ). Residues 378–440 (GLNGLSSADP…EGALPTGKSK (63 aa)) are lung-homing for mammary tumors. Residues Ser-412 and Ser-423 each carry the phosphoserine modification. A compositionally biased stretch (basic and acidic residues) spans 421-431 (KVSDDDKEKGE). A compositionally biased stretch (basic residues) spans 438–448 (KSKKKKKKKKK). Positions 449 to 470 (QGEDNSHTQDTEDLEKDTREEL) are enriched in basic and acidic residues. A phosphoserine mark is found at Ser-454, Ser-475, Ser-491, and Ser-493. Polar residues-rich tracts occupy residues 517–533 (PSITLSKGDSDNSSSQV) and 546–565 (NAKQNSVPPSQTKSETNWES). Ser-565 carries the phosphoserine modification. Over residues 568–579 (QIKKKKKARRET) the composition is skewed to basic residues.

In terms of assembly, interacts with BCCIP, CREBBP/CBP and RELA/p65. As to expression, in the mammary gland, expressed at the apical surface of epithelial cells lining ducts, as well as in the mammary fat pad. Not detected in the spleen, kidney, lung, or skin; minute amounts seen in the liver. Expressed in Purkinje neurons in the early postnatal and adult cerebellum. Overexpressed in mammary tumors (at protein level).

The protein resides in the endoplasmic reticulum membrane. It is found in the nucleus membrane. Its subcellular location is the cell junction. The protein localises to the tight junction. It localises to the nucleus. The protein resides in the nucleolus. It is found in the cytoplasm. Its subcellular location is the perinuclear region. Its function is as follows. Down-regulates SLC1A2/EAAT2 promoter activity when expressed ectopically. Activates the nuclear factor kappa-B (NF-kappa-B) transcription factor. Promotes anchorage-independent growth of immortalized melanocytes and astrocytes which is a key component in tumor cell expansion. Promotes lung metastasis and also has an effect on bone and brain metastasis, possibly by enhancing the seeding of tumor cells to the target organ endothelium. Induces chemoresistance. In Mus musculus (Mouse), this protein is Protein LYRIC (Mtdh).